A 160-amino-acid chain; its full sequence is UPF0262 protein ELI_10965 (160 aa).

The protein belongs to the UPF0262 family.

In Erythrobacter litoralis (strain HTCC2594), this protein is UPF0262 protein ELI_10965.